The primary structure comprises 879 residues: Metabotropic glutamate receptor 3 (879 aa).

Residues 1–22 (MKMLTRLQILMLALFSKGFLLS) form the signal peptide. Topologically, residues 23–576 (LGDHNFMRRE…EDYIKWEDAW (554 aa)) are extracellular. Cysteines 57 and 99 form a disulfide. L-glutamate contacts are provided by residues Arg68, Ser151, and 172-174 (AST). A glycan (N-linked (GlcNAc...) asparagine) is linked at Asn209. Tyr222 is a binding site for L-glutamate. 7 cysteine pairs are disulfide-bonded: Cys240/Cys527, Cys361/Cys373, Cys412/Cys419, Cys509/Cys528, Cys513/Cys531, Cys534/Cys546, and Cys549/Cys562. An N-linked (GlcNAc...) asparagine glycan is attached at Asn292. Asp301 provides a ligand contact to L-glutamate. Lys389 serves as a coordination point for L-glutamate. 2 N-linked (GlcNAc...) asparagine glycosylation sites follow: Asn414 and Asn439. Residues 577–599 (AIGPVTIACLGFLCTCIVITVFI) form a helical membrane-spanning segment. Topologically, residues 600 to 613 (KHNNTPLVKASGRE) are cytoplasmic. The chain crosses the membrane as a helical span at residues 614–634 (LCYILLFGVSLSYCMTFFFIA). Over 635 to 645 (KPSPVICALRR) the chain is Extracellular. Residues 646 to 664 (LGLGTSFAICYSALLTKTN) form a helical membrane-spanning segment. Residues 665 to 688 (CIARIFDGVKNGAQRPKFISPSSQ) are Cytoplasmic-facing. Residues 689 to 709 (VFICLGLILVQIVMVSVWLIL) form a helical membrane-spanning segment. Residues 710–734 (ETPGTRRYTLPEKRETVILKCNVKD) are Extracellular-facing. A helical membrane pass occupies residues 735-756 (SSMLISLTYDVVLVILCTVYAF). Residues 757 to 769 (KTRKCPENFNEAK) are Cytoplasmic-facing. A helical membrane pass occupies residues 770–792 (FIGFTMYTTCIIWLAFLPIFYVT). Topologically, residues 793–802 (SSDYRVQTTT) are extracellular. The chain crosses the membrane as a helical span at residues 803–828 (MCISVSLSGFVVLGCLFAPKVHIVLF). The Cytoplasmic segment spans residues 829–879 (QPQKNVVTHRLHLNRFSVSGTATTYSQSSASTYVPTVCNGREVLDSTTSSL).

This sequence belongs to the G-protein coupled receptor 3 family. Interacts with TAMALIN. In terms of tissue distribution, is widely distributed in the CNS. Predominant expression is seen in the neuronal cells of the cerebral cortex, dentate gyrus, and glial cells throughout brain regions.

It localises to the cell membrane. Its function is as follows. G-protein coupled receptor for glutamate. Ligand binding causes a conformation change that triggers signaling via guanine nucleotide-binding proteins (G proteins) and modulates the activity of down-stream effectors. Signaling inhibits adenylate cyclase activity. In Rattus norvegicus (Rat), this protein is Metabotropic glutamate receptor 3 (Grm3).